We begin with the raw amino-acid sequence, 416 residues long: MKIYLVGGAVRDSLLNLPIKDKDYLVVGATPEQMLQLGYRQVGKDFPVFLHPKNQQEYALARTERKIALGYGGFSCHASPDVTLEQDLLRRDLTINAIAQDEKGNLYDPFNGIEDINARLLRHVSDAFVEDPLRVLRVARFAARFHALGFHIAAETLALMRQISASDELNALTAERVWQEVDKSLGGPHPEVFFEVLHQCGALEVLFPEIFALFGVPQPEKWHPEIDTGVHTLMVLAQAALLTEDKSVRFAALVHDLGKALSPKEHLPKHHGHGQKGLPLIKALCTRLRVPNETRDLALLVSDQHQNVHQAFELRAETIVKIFDKADFWRKPERLTQLILACTADMRGRTGFENNPYPQGEYLTQCFLAANNVDIAAIIAAGFQGAEIKQALNLRRIEAVSQFKQKMQTKLPTDEQ.

Positions 8 and 11 each coordinate ATP. CTP-binding residues include glycine 8 and arginine 11. Mg(2+) is bound by residues aspartate 21 and aspartate 23. Residues arginine 91, arginine 137, and arginine 140 each contribute to the ATP site. Arginine 91, arginine 137, and arginine 140 together coordinate CTP. The HD domain occupies threonine 228–tryptophan 329.

Belongs to the tRNA nucleotidyltransferase/poly(A) polymerase family. Bacterial CCA-adding enzyme type 1 subfamily. As to quaternary structure, monomer. Can also form homodimers and oligomers. The cofactor is Mg(2+). Requires Ni(2+) as cofactor.

The enzyme catalyses a tRNA precursor + 2 CTP + ATP = a tRNA with a 3' CCA end + 3 diphosphate. It carries out the reaction a tRNA with a 3' CCA end + 2 CTP + ATP = a tRNA with a 3' CCACCA end + 3 diphosphate. Functionally, catalyzes the addition and repair of the essential 3'-terminal CCA sequence in tRNAs without using a nucleic acid template. Adds these three nucleotides in the order of C, C, and A to the tRNA nucleotide-73, using CTP and ATP as substrates and producing inorganic pyrophosphate. tRNA 3'-terminal CCA addition is required both for tRNA processing and repair. Also involved in tRNA surveillance by mediating tandem CCA addition to generate a CCACCA at the 3' terminus of unstable tRNAs. While stable tRNAs receive only 3'-terminal CCA, unstable tRNAs are marked with CCACCA and rapidly degraded. This chain is Multifunctional CCA protein, found in Shewanella baltica (strain OS195).